Reading from the N-terminus, the 73-residue chain is Small ribosomal subunit protein bS18 (73 aa).

Belongs to the bacterial ribosomal protein bS18 family. As to quaternary structure, part of the 30S ribosomal subunit. Forms a tight heterodimer with protein bS6.

Its function is as follows. Binds as a heterodimer with protein bS6 to the central domain of the 16S rRNA, where it helps stabilize the platform of the 30S subunit. In Prochlorococcus marinus subsp. pastoris (strain CCMP1986 / NIES-2087 / MED4), this protein is Small ribosomal subunit protein bS18.